A 508-amino-acid polypeptide reads, in one-letter code: Photosystem II CP47 reaction center protein (508 aa).

6 helical membrane passes run alanine 21–serine 36, isoleucine 101–tryptophan 115, glycine 140–phenylalanine 156, isoleucine 203–serine 218, valine 237–valine 252, and threonine 457–arginine 472.

It belongs to the PsbB/PsbC family. PsbB subfamily. As to quaternary structure, PSII is composed of 1 copy each of membrane proteins PsbA, PsbB, PsbC, PsbD, PsbE, PsbF, PsbH, PsbI, PsbJ, PsbK, PsbL, PsbM, PsbT, PsbX, PsbY, PsbZ, Psb30/Ycf12, at least 3 peripheral proteins of the oxygen-evolving complex and a large number of cofactors. It forms dimeric complexes. It depends on Binds multiple chlorophylls. PSII binds additional chlorophylls, carotenoids and specific lipids. as a cofactor.

It is found in the plastid. The protein localises to the chloroplast thylakoid membrane. Its function is as follows. One of the components of the core complex of photosystem II (PSII). It binds chlorophyll and helps catalyze the primary light-induced photochemical processes of PSII. PSII is a light-driven water:plastoquinone oxidoreductase, using light energy to abstract electrons from H(2)O, generating O(2) and a proton gradient subsequently used for ATP formation. This chain is Photosystem II CP47 reaction center protein, found in Agrostis stolonifera (Creeping bentgrass).